Reading from the N-terminus, the 134-residue chain is D-ribose pyranase (134 aa).

The active-site Proton donor is His-20. Residues Asp-28, His-101, and 123–125 (YCN) each bind substrate.

The protein belongs to the RbsD / FucU family. RbsD subfamily. In terms of assembly, homodecamer.

It localises to the cytoplasm. The enzyme catalyses beta-D-ribopyranose = beta-D-ribofuranose. It participates in carbohydrate metabolism; D-ribose degradation; D-ribose 5-phosphate from beta-D-ribopyranose: step 1/2. Functionally, catalyzes the interconversion of beta-pyran and beta-furan forms of D-ribose. The sequence is that of D-ribose pyranase from Pseudomonas fluorescens (strain Pf0-1).